The chain runs to 203 residues: N-(5'-phosphoribosyl)anthranilate isomerase (203 aa).

Belongs to the TrpF family.

It catalyses the reaction N-(5-phospho-beta-D-ribosyl)anthranilate = 1-(2-carboxyphenylamino)-1-deoxy-D-ribulose 5-phosphate. Its pathway is amino-acid biosynthesis; L-tryptophan biosynthesis; L-tryptophan from chorismate: step 3/5. This is N-(5'-phosphoribosyl)anthranilate isomerase from Thermoanaerobacter sp. (strain X514).